Consider the following 599-residue polypeptide: Sulfite reductase [NADPH] flavoprotein alpha-component (599 aa).

The Flavodoxin-like domain occupies 64-202 (ITIISASQTG…AASEWRARVV (139 aa)). FMN-binding positions include 70–75 (SQTGNA), 117–120 (STQG), and 153–162 (LGDSSYEFFC). The FAD-binding FR-type domain occupies 234-448 (DAPLVASLSV…IEHNDNFRLP (215 aa)). FAD contacts are provided by residues Thr322, Ala356, 386–389 (RLYS), 404–406 (TVG), Tyr410, and 419–422 (GGAS). Residues 519 to 520 (SR), 525 to 529 (KVYVQ), and Asp561 each bind NADP(+). Tyr599 contacts FAD.

The protein belongs to the NADPH-dependent sulphite reductase flavoprotein subunit CysJ family. It in the N-terminal section; belongs to the flavodoxin family. In the C-terminal section; belongs to the flavoprotein pyridine nucleotide cytochrome reductase family. As to quaternary structure, alpha(8)-beta(8). The alpha component is a flavoprotein, the beta component is a hemoprotein. It depends on FAD as a cofactor. FMN serves as cofactor.

The enzyme catalyses hydrogen sulfide + 3 NADP(+) + 3 H2O = sulfite + 3 NADPH + 4 H(+). The protein operates within sulfur metabolism; hydrogen sulfide biosynthesis; hydrogen sulfide from sulfite (NADPH route): step 1/1. In terms of biological role, component of the sulfite reductase complex that catalyzes the 6-electron reduction of sulfite to sulfide. This is one of several activities required for the biosynthesis of L-cysteine from sulfate. The flavoprotein component catalyzes the electron flow from NADPH -&gt; FAD -&gt; FMN to the hemoprotein component. This is Sulfite reductase [NADPH] flavoprotein alpha-component from Escherichia coli (strain K12).